Here is a 288-residue protein sequence, read N- to C-terminus: Thymidylate synthase (288 aa).

Residues Arg21 and 150-151 (RR) contribute to the dUMP site. Residue Cys170 is the Nucleophile of the active site. DUMP is bound by residues 191 to 194 (RSGD), Asn202, and 232 to 234 (HIY). Asp194 is a (6R)-5,10-methylene-5,6,7,8-tetrahydrofolate binding site. Ala287 serves as a coordination point for (6R)-5,10-methylene-5,6,7,8-tetrahydrofolate.

Belongs to the thymidylate synthase family. Bacterial-type ThyA subfamily. In terms of assembly, homodimer.

Its subcellular location is the cytoplasm. The enzyme catalyses dUMP + (6R)-5,10-methylene-5,6,7,8-tetrahydrofolate = 7,8-dihydrofolate + dTMP. The protein operates within pyrimidine metabolism; dTTP biosynthesis. Catalyzes the reductive methylation of 2'-deoxyuridine-5'-monophosphate (dUMP) to 2'-deoxythymidine-5'-monophosphate (dTMP) while utilizing 5,10-methylenetetrahydrofolate (mTHF) as the methyl donor and reductant in the reaction, yielding dihydrofolate (DHF) as a by-product. This enzymatic reaction provides an intracellular de novo source of dTMP, an essential precursor for DNA biosynthesis. The polypeptide is Thymidylate synthase (Mesoplasma florum (strain ATCC 33453 / NBRC 100688 / NCTC 11704 / L1) (Acholeplasma florum)).